The following is a 514-amino-acid chain: piRNA biogenesis protein EXD1 (514 aa).

A 3'-5' exonuclease domain is found at 30–122; it reads LHAERTWMEK…HGKLCWLQVA (93 aa). Residues 384–422 are disordered; sequence SLNKQATNPQHLPPTEEGETSEDSSNKLICTKSKGSEDQ.

This sequence belongs to the EXD1 family. In terms of assembly, homodimer. Component of the PET complex, at least composed of EXD1, PIWIL2, TDRD12 and piRNAs.

Its subcellular location is the cytoplasm. RNA-binding component of the PET complex, a multiprotein complex required for the processing of piRNAs during spermatogenesis. The piRNA metabolic process mediates the repression of transposable elements during meiosis by forming complexes composed of piRNAs and Piwi proteins and governs the methylation and subsequent repression of transposable elements, preventing their mobilization, which is essential for the germline integrity. The PET complex is required during the secondary piRNAs metabolic process for the PIWIL2 slicing-triggered loading of PIWIL4 piRNAs. In the PET complex, EXD1 probably acts as an RNA adapter. EXD1 is an inactive exonuclease. The chain is piRNA biogenesis protein EXD1 (EXD1) from Homo sapiens (Human).